A 454-amino-acid polypeptide reads, in one-letter code: Ribosomal protein uS12 methylthiotransferase RimO (454 aa).

An MTTase N-terminal domain is found at 19 to 129 (AKVGFVSLGC…VLAQVHEHVA (111 aa)). Positions 28, 64, 93, 161, 165, and 168 each coordinate [4Fe-4S] cluster. The Radical SAM core domain occupies 147–384 (LTPKHYAYLK…MAVQAKISSD (238 aa)). The TRAM domain occupies 387–453 (QVRIGQEYLI…EHDVWGVRVE (67 aa)).

It belongs to the methylthiotransferase family. RimO subfamily. It depends on [4Fe-4S] cluster as a cofactor.

It is found in the cytoplasm. It catalyses the reaction L-aspartate(89)-[ribosomal protein uS12]-hydrogen + (sulfur carrier)-SH + AH2 + 2 S-adenosyl-L-methionine = 3-methylsulfanyl-L-aspartate(89)-[ribosomal protein uS12]-hydrogen + (sulfur carrier)-H + 5'-deoxyadenosine + L-methionine + A + S-adenosyl-L-homocysteine + 2 H(+). Its function is as follows. Catalyzes the methylthiolation of an aspartic acid residue of ribosomal protein uS12. This Colwellia psychrerythraea (strain 34H / ATCC BAA-681) (Vibrio psychroerythus) protein is Ribosomal protein uS12 methylthiotransferase RimO.